The following is a 47-amino-acid chain: PhoP/PhoQ regulator MgrB (47 aa).

A helical membrane pass occupies residues Trp-6–Val-26.

This sequence belongs to the MgrB family. In terms of assembly, may form homooligomers. Probably interacts with the periplasmic domain of PhoQ.

The protein localises to the cell inner membrane. Its function is as follows. PhoP-regulated transcription is redox-sensitive, being activated when the periplasm becomes more reducing. MgrB acts between DsbA/DsbB and PhoP/PhoQ in this pathway. Represses PhoP/PhoQ signaling, possibly by binding to the periplasmic domain of PhoQ, altering its activity and that of downstream effector PhoP. In Enterobacter sp. (strain 638), this protein is PhoP/PhoQ regulator MgrB.